Here is a 357-residue protein sequence, read N- to C-terminus: Ketoreductase CTB6 (357 aa).

Tyrosine 172 is an NADP(+) binding site.

The protein belongs to the NAD(P)-dependent epimerase/dehydratase family. Dihydroflavonol-4-reductase subfamily.

It participates in mycotoxin biosynthesis. In terms of biological role, ketoreductase; part of the gene cluster that mediates the biosynthesis of cercosporin, a light-activated, non-host-selective toxin. The perylenequinone chromophore of cercosporin absorbs light energy to attain an electronically-activated triplet state and produces active oxygen species such as the hydroxyl radical, superoxide, hydrogen peroxide or singlet oxygen upon reaction with oxygen molecules. These reactive oxygen species cause damage to various cellular components including lipids, proteins and nucleic acids. The first step of cercosporin biosynthesis is performed by the polyketide synthase CTB1 which catalyzes the formation of nor-toralactone. The starter unit acyltransferase (SAT) domain of CTB1 initiates polyketide extension by the selective utilization of acetyl-CoA, which is elongated to the heptaketide in the beta-ketoacyl synthase (KS) domain by successive condensations with six malonyl units introduced by the malonyl acyltransferase (MAT) domain. The product template (PT) domain catalyzes C4-C9 and C2-C11 aldol cyclizations and dehydrations to a trihydroxynaphthalene, which is thought to be delivered to the thioesterase (TE) domain for product release. The bifunctional enzyme CTB3 then methylates nor-toralactone to toralactone before conducting an unusual oxidative aromatic ring opening. The O-methyltransferase CTB2 further methylates the nascent OH-6 of the CBT3 product, blocking further oxidation at this site before the reductase CTB6 reduces the 2-oxopropyl ketone at position C7, giving naphthalene. The FAD-dependent monooxygenase CTB5 in concert with the multicopper oxidase CTB12 are responsible for homodimerization of naphthalene with CTB7 installing the dioxepine moiety, finally producing cercosporin. The fasciclin domain-containing protein CTB11 might act with CTB5 and CTB12 whereas the roles of CTB9 and CTB10 have still to be elucidated. The protein is Ketoreductase CTB6 of Cercospora beticola (Sugarbeet leaf spot fungus).